The following is a 350-amino-acid chain: 3-isopropylmalate dehydrogenase (350 aa).

71–84 (GPKWADAPRHLRPE) is an NAD(+) binding site. Substrate contacts are provided by R91, R101, R129, and D220. Mg(2+)-binding residues include D220, D244, and D248. 279 to 291 (GSAPDIAGKGLAN) contributes to the NAD(+) binding site.

The protein belongs to the isocitrate and isopropylmalate dehydrogenases family. LeuB type 1 subfamily. In terms of assembly, homodimer. Mg(2+) serves as cofactor. The cofactor is Mn(2+).

The protein localises to the cytoplasm. It catalyses the reaction (2R,3S)-3-isopropylmalate + NAD(+) = 4-methyl-2-oxopentanoate + CO2 + NADH. The protein operates within amino-acid biosynthesis; L-leucine biosynthesis; L-leucine from 3-methyl-2-oxobutanoate: step 3/4. Catalyzes the oxidation of 3-carboxy-2-hydroxy-4-methylpentanoate (3-isopropylmalate) to 3-carboxy-4-methyl-2-oxopentanoate. The product decarboxylates to 4-methyl-2 oxopentanoate. The protein is 3-isopropylmalate dehydrogenase of Caulobacter vibrioides (strain ATCC 19089 / CIP 103742 / CB 15) (Caulobacter crescentus).